A 1679-amino-acid polypeptide reads, in one-letter code: AF4/FMR2 family member lilli (1679 aa).

Disordered regions lie at residues methionine 1–asparagine 21, asparagine 55–isoleucine 78, arginine 124–valine 305, leucine 406–asparagine 539, methionine 580–tryptophan 609, aspartate 733–glycine 755, glutamine 783–histidine 1172, and threonine 1197–glycine 1319. Residues arginine 69 to isoleucine 78 show a composition bias toward basic and acidic residues. Composition is skewed to low complexity over residues serine 144 to glutamine 181 and proline 212 to glycine 244. Threonine 421 bears the Phosphothreonine mark. Residues leucine 429–serine 442 are compositionally biased toward basic and acidic residues. Acidic residues predominate over residues leucine 444 to aspartate 455. Residues serine 451 and serine 453 each carry the phosphoserine modification. The span at serine 464–serine 484 shows a compositional bias: low complexity. A compositionally biased stretch (basic residues) spans histidine 492–glutamine 501. Low complexity predominate over residues leucine 502 to leucine 532. Positions alanine 582 to serine 591 are enriched in gly residues. A compositionally biased stretch (polar residues) spans asparagine 598–tryptophan 609. A compositionally biased stretch (low complexity) spans aspartate 733–alanine 752. Residues glutamine 783 to valine 796 show a composition bias toward polar residues. A compositionally biased stretch (basic residues) spans glutamine 810–alanine 820. A phosphoserine mark is found at serine 829 and serine 830. Residues lysine 859–serine 871 constitute a DNA-binding region (a.T hook). Residues glutamine 868–alanine 906 are compositionally biased toward low complexity. Serine 879 and serine 881 each carry phosphoserine. Residues serine 917 to threonine 927 are compositionally biased toward polar residues. Composition is skewed to low complexity over residues serine 957 to serine 973 and glycine 1001 to serine 1012. The span at threonine 1019 to alanine 1030 shows a compositional bias: polar residues. Residues serine 1042–serine 1068 are compositionally biased toward low complexity. Over residues glutamate 1073–lysine 1090 the composition is skewed to basic and acidic residues. Residues glutamine 1130–alanine 1140 show a composition bias toward pro residues. Polar residues predominate over residues proline 1198–asparagine 1213. Composition is skewed to basic and acidic residues over residues glutamate 1234–phenylalanine 1251 and phenylalanine 1260–proline 1288. Serine 1368 is modified (phosphoserine). The residue at position 1370 (threonine 1370) is a Phosphothreonine. Low complexity predominate over residues glycine 1569–asparagine 1589. The tract at residues glycine 1569–arginine 1594 is disordered.

The protein belongs to the AF4 family.

It localises to the nucleus. Functionally, has a role in transcriptional regulation. Acts in parallel with the Ras/MAPK and the PI3K/PKB pathways in the control of cell identity and cellular growth. Essential for regulation of the cytoskeleton and cell growth but not for cell proliferation or growth rate. Required specifically for the microtubule-based basal transport of lipid droplets. Plays a partially redundant function downstream of Raf in cell fate specification in the developing eye. Pair-rule protein that regulates embryonic cellularization, gastrulation and segmentation. This is AF4/FMR2 family member lilli from Drosophila erecta (Fruit fly).